Here is a 125-residue protein sequence, read N- to C-terminus: uncharacterized protein (125 aa).

The protein to transposase of insertion sequence IS6501.

This is an uncharacterized protein from Sinorhizobium fredii (strain NBRC 101917 / NGR234).